We begin with the raw amino-acid sequence, 83 residues long: Cell division topological specificity factor (83 aa).

The protein belongs to the MinE family.

Prevents the cell division inhibition by proteins MinC and MinD at internal division sites while permitting inhibition at polar sites. This ensures cell division at the proper site by restricting the formation of a division septum at the midpoint of the long axis of the cell. This is Cell division topological specificity factor from Buchnera aphidicola subsp. Acyrthosiphon pisum (strain 5A).